The sequence spans 192 residues: Putative ripening-related protein 2 (192 aa).

Positions 1–26 (MATTNCLLALAIAGLVLVSLPGLSRG) are cleaved as a signal peptide.

The protein belongs to the kiwellin family.

It localises to the secreted. The protein is Putative ripening-related protein 2 of Oryza sativa subsp. japonica (Rice).